Here is a 220-residue protein sequence, read N- to C-terminus: Protein-L-isoaspartate O-methyltransferase (220 aa).

S67 is a catalytic residue.

The protein belongs to the methyltransferase superfamily. L-isoaspartyl/D-aspartyl protein methyltransferase family.

The protein resides in the cytoplasm. The catalysed reaction is [protein]-L-isoaspartate + S-adenosyl-L-methionine = [protein]-L-isoaspartate alpha-methyl ester + S-adenosyl-L-homocysteine. Catalyzes the methyl esterification of L-isoaspartyl residues in peptides and proteins that result from spontaneous decomposition of normal L-aspartyl and L-asparaginyl residues. It plays a role in the repair and/or degradation of damaged proteins. This is Protein-L-isoaspartate O-methyltransferase from Chlorobium phaeobacteroides (strain BS1).